A 337-amino-acid chain; its full sequence is Protein ABHD13 (337 aa).

Residues 37–57 form a helical; Signal-anchor for type II membrane protein membrane-spanning segment; sequence FHLYGGIILLLLIFISIAGIL. Residues S193, D268, and H298 each act as charge relay system in the active site. N299 is a glycosylation site (N-linked (GlcNAc...) asparagine).

This sequence belongs to the serine esterase family.

It is found in the membrane. The polypeptide is Protein ABHD13 (Homo sapiens (Human)).